A 345-amino-acid chain; its full sequence is Ephrin-B1 (345 aa).

An N-terminal signal peptide occupies residues 1 to 24 (MARPGQRWLSKWLVAMVVLTLCRL). The Extracellular portion of the chain corresponds to 25 to 236 (ATPLAKNLEP…GDSDSFFNSK (212 aa)). One can recognise an Ephrin RBD domain in the interval 30–164 (KNLEPVSWSS…TRTMKIVMKV (135 aa)). 2 disulfides stabilise this stretch: C64/C101 and C89/C153. N139 is a glycosylation site (N-linked (GlcNAc...) asparagine). Residues 169 to 227 (NAVTPEQLTTSRPSKESDNTVKTATQAPGRGSQGDSDGKHETVNQEEKSGPGAGGGGSG) are disordered. The span at 204 to 217 (SDGKHETVNQEEKS) shows a compositional bias: basic and acidic residues. Residues 237-257 (VALFAAVGAGCVIFLLIIIFL) form a helical membrane-spanning segment. The Cytoplasmic portion of the chain corresponds to 258 to 345 (TVLLLKLRKR…QSPANIYYKV (88 aa)). Positions 259–272 (VLLLKLRKRHRKHT) match the Nuclear localization signal motif. The interaction with ZHX2 stretch occupies residues 262–293 (LKLRKRHRKHTQQRAAALSLSTLASPKGGSGT). Residues S280 and S286 each carry the phosphoserine modification. The PDZ-binding signature appears at 343–345 (YKV).

This sequence belongs to the ephrin family. In terms of assembly, interacts (via PDZ-binding motif) with GRIP1 and GRIP2 (via PDZ domain 6). Interacts with TLE1. The intracellular domain peptide interacts with ZHX2; the interaction enhances ZHX2 transcriptional repression activity. Post-translationally, inducible phosphorylation of tyrosine residues in the cytoplasmic domain. Proteolytically processed. The ectodomain is cleaved, probably by a metalloprotease, to produce a membrane-tethered C-terminal fragment. This fragment is then further processed by the gamma-secretase complex to yield a soluble intracellular domain peptide which can translocate to the nucleus. The intracellular domain peptide is highly labile suggesting that it is targeted for degradation by the proteasome. In terms of tissue distribution, expressed on lateral floor plate cells, specifically on commissural axon segments that have passed through the floor plate. Expressed in cells of the retinal ganglion cell layer during retinal axon guidance to the optic disk. Expressed in myogenic progenitor cells.

It is found in the cell membrane. The protein resides in the membrane raft. Its subcellular location is the nucleus. Cell surface transmembrane ligand for Eph receptors, a family of receptor tyrosine kinases which are crucial for migration, repulsion and adhesion during neuronal, vascular and epithelial development. Binding to Eph receptors residing on adjacent cells leads to contact-dependent bidirectional signaling into neighboring cells. Shows high affinity for the receptor tyrosine kinase EPHB1/ELK. Can also bind EPHB2 and EPHB3. Binds to, and induces the collapse of, commissural axons/growth cones in vitro. May play a role in constraining the orientation of longitudinally projecting axons. The protein is Ephrin-B1 (Efnb1) of Mus musculus (Mouse).